The sequence spans 266 residues: Non-structural maintenance of chromosomes element 1 homolog (266 aa).

Residues 1 to 102 form an interaction with NSMCE3 region; that stretch reads MQGSTRRMSV…SISKMATDFA (102 aa). The segment at 191–232 adopts an RING-type; atypical zinc-finger fold; it reads CNICHSLLIQGQSCETCGIRMHLPCVAKYFQSNAEPRCPHCN. Residues 245–266 form a disordered region; sequence PEKERESGVSKSNKKSLRSRQH. Residue Ser-251 is modified to Phosphoserine. Positions 256-266 are enriched in basic residues; sequence SNKKSLRSRQH.

Belongs to the NSE1 family. In terms of assembly, component of the SMC5-SMC6 complex which consists at least of SMC5, SMC6, NSMCE2, NSMCE1, NSMCE4A or EID3 and NSMCE3. NSMCE1, NSMCE4A or EID3 and NSMCE3 probably form a subcomplex that bridges the head domains of the SMC5-SMC6 heterodimer. Interacts with NSMCE3. Ubiquitinated.

It is found in the nucleus. The protein resides in the chromosome. The protein localises to the telomere. The catalysed reaction is S-ubiquitinyl-[E2 ubiquitin-conjugating enzyme]-L-cysteine + [acceptor protein]-L-lysine = [E2 ubiquitin-conjugating enzyme]-L-cysteine + N(6)-ubiquitinyl-[acceptor protein]-L-lysine.. Functionally, RING-type zinc finger-containing E3 ubiquitin ligase that assembles with melanoma antigen protein (MAGE) to catalyze the direct transfer of ubiquitin from E2 ubiquitin-conjugating enzyme to a specific substrate. Within MAGE-RING ubiquitin ligase complex, MAGE stimulates and specifies ubiquitin ligase activity likely through recruitment and/or stabilization of the E2 ubiquitin-conjugating enzyme at the E3:substrate complex. Involved in maintenance of genome integrity, DNA damage response and DNA repair. NSMCE3/MAGEG1 and NSMCE1 ubiquitin ligase are components of SMC5-SMC6 complex and may positively regulate homologous recombination-mediated DNA repair. This chain is Non-structural maintenance of chromosomes element 1 homolog (NSMCE1), found in Pongo abelii (Sumatran orangutan).